A 118-amino-acid chain; its full sequence is T cell receptor gamma variable 4 (118 aa).

The first 17 residues, 1–17 (MQWALAVLLAFLSPASQ), serve as a signal peptide directing secretion. Residues 18-118 (KSSNLEGRTK…GVYYCATWDG (101 aa)) form the Ig-like domain. Cysteine 41 and cysteine 113 are disulfide-bonded. N-linked (GlcNAc...) asparagine glycosylation occurs at asparagine 106.

In terms of assembly, gamma-delta TR is a heterodimer composed of a gamma and delta chain; disulfide-linked. The gamma-delta TR is associated with the transmembrane signaling CD3 coreceptor proteins following the stoichiometry: a single gamma-delta TR heterodimer associates with one CD3D-CD3E heterodimer, one CD3G-CD3E heterodimer and one CD247 homodimer forming a stable octameric structure. Upon activation, gamma-delta TR complex associates with FCER1G to initiate intracellular signaling.

It localises to the cell membrane. Functionally, v region of the variable domain of T cell receptor (TR) gamma chain that participates in the antigen recognition. Gamma-delta TRs recognize a variety of self and foreign non-peptide antigens frequently expressed at the epithelial boundaries between the host and external environment, including endogenous lipids presented by MH-like protein CD1D and phosphoantigens presented by butyrophilin-like molecule BTN3A1. Upon antigen recognition induces rapid, innate-like immune responses involved in pathogen clearance and tissue repair. Binding of gamma-delta TR complex to antigen triggers phosphorylation of immunoreceptor tyrosine-based activation motifs (ITAMs) in the CD3 chains by the LCK and FYN kinases, allowing the recruitment, phosphorylation, and activation of ZAP70 that facilitates phosphorylation of the scaffolding proteins LCP2 and LAT. This lead to the formation of a supramolecular signalosome that recruits the phospholipase PLCG1, resulting in calcium mobilization and ERK activation, ultimately leading to T cell expansion and differentiation into effector cells. Gamma-delta TRs are produced through somatic rearrangement of a limited repertoire of variable (V), diversity (D), and joining (J) genes. The potential diversity of gamma-delta TRs is conferred by the unique ability to rearrange (D) genes in tandem and to utilize all three reading frames. The combinatorial diversity is considerably increased by the sequence exonuclease trimming and random nucleotide (N) region additions which occur during the V-(D)-J rearrangements. In Homo sapiens (Human), this protein is T cell receptor gamma variable 4.